The chain runs to 127 residues: Vacuolar ATPase assembly integral membrane protein VMA21 (127 aa).

The tract at residues 1 to 28 (MATRRNPTKESITTSPPPDQQPRQPGEL) is disordered. Residues 1–45 (MATRRNPTKESITTSPPPDQQPRQPGELEHREAIQLRDLPGYPQQ) are Cytoplasmic-facing. Residues 46–66 (VLWKLIIYSIAVLVLPLSAYF) traverse the membrane as a helical segment. At 67-79 (YSVNYVFDGNTTY) the chain is on the lumenal side. The helical transmembrane segment at 80–100 (AGATAAITANLILFSYIVVAM) threads the bilayer. The Cytoplasmic portion of the chain corresponds to 101–127 (REDKGDQEQLREQQQLRGNKEETKKMK). Residues 107–127 (QEQLREQQQLRGNKEETKKMK) are disordered. Over residues 118-127 (GNKEETKKMK) the composition is skewed to basic and acidic residues. Positions 124 to 127 (KKMK) match the Prevents secretion from ER motif.

This sequence belongs to the VMA21 family.

The protein resides in the endoplasmic reticulum membrane. Its subcellular location is the endoplasmic reticulum-Golgi intermediate compartment membrane. It is found in the cytoplasmic vesicle. The protein localises to the COPII-coated vesicle membrane. Functionally, required for the assembly of the V0 complex of the vacuolar ATPase (V-ATPase) in the endoplasmic reticulum. This is Vacuolar ATPase assembly integral membrane protein VMA21 from Coccidioides immitis (strain RS) (Valley fever fungus).